Here is a 491-residue protein sequence, read N- to C-terminus: Fatty acyl-CoA reductase 1 (491 aa).

This sequence belongs to the fatty acyl-CoA reductase family. As to expression, expressed in the endodermal cell layer surrounding the central vasculature in roots. Expressed in the hilum region of seeds. Expressed in lateral root tips, cotyledons, the shoot apex, young leaves, petals, stamen filaments, and receptacle of siliques.

It carries out the reaction a long-chain fatty acyl-CoA + 2 NADPH + 2 H(+) = a long-chain primary fatty alcohol + 2 NADP(+) + CoA. In terms of biological role, catalyzes the reduction of fatty acyl-CoA to fatty alcohols. Catalyzes specifically the formation of C18:0 and C22:0 fatty alcohols. Provides the fatty alcohols required for synthesis of suberin in roots, seed coat and wound-induced leaf tissue. Provides the fatty alcohols required for synthesis of alkyl hydroxycinnamates in root waxes. The chain is Fatty acyl-CoA reductase 1 from Arabidopsis thaliana (Mouse-ear cress).